A 1400-amino-acid chain; its full sequence is DNA-directed RNA polymerase subunit beta' (1400 aa).

Cysteine 71, cysteine 73, cysteine 86, and cysteine 89 together coordinate Zn(2+). Residues aspartate 462, aspartate 464, and aspartate 466 each coordinate Mg(2+). Residues cysteine 811, cysteine 885, cysteine 892, and cysteine 895 each coordinate Zn(2+).

Belongs to the RNA polymerase beta' chain family. In terms of assembly, the RNAP catalytic core consists of 2 alpha, 1 beta, 1 beta' and 1 omega subunit. When a sigma factor is associated with the core the holoenzyme is formed, which can initiate transcription. The cofactor is Mg(2+). Zn(2+) serves as cofactor.

It carries out the reaction RNA(n) + a ribonucleoside 5'-triphosphate = RNA(n+1) + diphosphate. Functionally, DNA-dependent RNA polymerase catalyzes the transcription of DNA into RNA using the four ribonucleoside triphosphates as substrates. The protein is DNA-directed RNA polymerase subunit beta' of Brucella suis (strain ATCC 23445 / NCTC 10510).